The sequence spans 79 residues: Acyl carrier protein (79 aa).

In terms of domain architecture, Carrier spans 2–77 (SNIEERVKKI…QAIDYINAHA (76 aa)). Position 37 is an O-(pantetheine 4'-phosphoryl)serine (serine 37).

The protein belongs to the acyl carrier protein (ACP) family. Post-translationally, 4'-phosphopantetheine is transferred from CoA to a specific serine of apo-ACP by AcpS. This modification is essential for activity because fatty acids are bound in thioester linkage to the sulfhydryl of the prosthetic group.

It is found in the cytoplasm. It participates in lipid metabolism; fatty acid biosynthesis. In terms of biological role, carrier of the growing fatty acid chain in fatty acid biosynthesis. The chain is Acyl carrier protein from Thioalkalivibrio sulfidiphilus (strain HL-EbGR7).